The chain runs to 247 residues: NCT transcriptional regulatory complex subunit A (247 aa).

A compositionally biased stretch (basic and acidic residues) spans M1 to S12. 3 disordered regions span residues M1–Y31, F48–M82, and V212–D247. Positions P13–I22 are enriched in polar residues.

This sequence belongs to the NC2 alpha/DRAP1 family. As to quaternary structure, forms the NCT transcriptional regulatory complex with nctB and mot1.

It is found in the nucleus. Its function is as follows. Part of the NCT transcriptional regulatory complex that acts as a key regulator of ergosterol biosynthesis and the azole exporter cdr1B. The NCT complex binds the promoters of genes linked to azole susceptibility, and especially represses the expression of cdr1B transporter. The chain is NCT transcriptional regulatory complex subunit A from Aspergillus fumigatus (strain CBS 144.89 / FGSC A1163 / CEA10) (Neosartorya fumigata).